The primary structure comprises 294 residues: S-adenosylmethionine uptake transporter (294 aa).

Helical transmembrane passes span 4-24 (ALKT…SSSA), 39-59 (FEVA…FVFY), 74-91 (ILRG…TYGL), 98-118 (TATV…VFFL), 121-141 (NIIW…VVTL), 148-168 (FNPE…LDII), 177-197 (SMIS…LPVA), 207-227 (FELA…FFLL), 237-257 (ATAP…YFIF), and 260-280 (FPDK…LFII). EamA domains lie at 21-141 (SSSA…VVTL) and 160-280 (ISFA…LFII).

Belongs to the drug/metabolite transporter (DMT) superfamily. 10 TMS drug/metabolite exporter (DME) (TC 2.A.7.3) family.

Its subcellular location is the cell inner membrane. Its function is as follows. Transports S-adenosylmethionine. This Rickettsia felis (strain ATCC VR-1525 / URRWXCal2) (Rickettsia azadi) protein is S-adenosylmethionine uptake transporter (sam).